Here is a 207-residue protein sequence, read N- to C-terminus: Superoxide dismutase [Mn] (207 aa).

Positions 30, 78, 166, and 170 each coordinate Mn(2+).

This sequence belongs to the iron/manganese superoxide dismutase family. In terms of assembly, homodimer. Requires Mn(2+) as cofactor.

The enzyme catalyses 2 superoxide + 2 H(+) = H2O2 + O2. Destroys superoxide anion radicals which are normally produced within the cells and which are toxic to biological systems. The polypeptide is Superoxide dismutase [Mn] (sodA) (Chlamydia pneumoniae (Chlamydophila pneumoniae)).